Reading from the N-terminus, the 167-residue chain is 6,7-dimethyl-8-ribityllumazine synthase (167 aa).

Residues Phe23, 57–59 (TYE), and 81–83 (AVI) contribute to the 5-amino-6-(D-ribitylamino)uracil site. Residue 86 to 87 (GT) coordinates (2S)-2-hydroxy-3-oxobutyl phosphate. The active-site Proton donor is His89. Position 119 (Phe119) interacts with 5-amino-6-(D-ribitylamino)uracil. (2S)-2-hydroxy-3-oxobutyl phosphate is bound at residue Arg133.

Belongs to the DMRL synthase family.

The catalysed reaction is (2S)-2-hydroxy-3-oxobutyl phosphate + 5-amino-6-(D-ribitylamino)uracil = 6,7-dimethyl-8-(1-D-ribityl)lumazine + phosphate + 2 H2O + H(+). It functions in the pathway cofactor biosynthesis; riboflavin biosynthesis; riboflavin from 2-hydroxy-3-oxobutyl phosphate and 5-amino-6-(D-ribitylamino)uracil: step 1/2. In terms of biological role, catalyzes the formation of 6,7-dimethyl-8-ribityllumazine by condensation of 5-amino-6-(D-ribitylamino)uracil with 3,4-dihydroxy-2-butanone 4-phosphate. This is the penultimate step in the biosynthesis of riboflavin. The protein is 6,7-dimethyl-8-ribityllumazine synthase of Myxococcus xanthus (strain DK1622).